A 139-amino-acid chain; its full sequence is S-adenosylmethionine decarboxylase proenzyme (139 aa).

Residue S63 is the Schiff-base intermediate with substrate; via pyruvic acid of the active site. S63 carries the post-translational modification Pyruvic acid (Ser); by autocatalysis. H68 serves as the catalytic Proton acceptor; for processing activity. C83 serves as the catalytic Proton donor; for catalytic activity.

Belongs to the prokaryotic AdoMetDC family. Type 1 subfamily. Heterotetramer of two alpha and two beta chains arranged as a dimer of alpha/beta heterodimers. Requires pyruvate as cofactor. In terms of processing, is synthesized initially as an inactive proenzyme. Formation of the active enzyme involves a self-maturation process in which the active site pyruvoyl group is generated from an internal serine residue via an autocatalytic post-translational modification. Two non-identical subunits are generated from the proenzyme in this reaction, and the pyruvate is formed at the N-terminus of the alpha chain, which is derived from the carboxyl end of the proenzyme. The post-translation cleavage follows an unusual pathway, termed non-hydrolytic serinolysis, in which the side chain hydroxyl group of the serine supplies its oxygen atom to form the C-terminus of the beta chain, while the remainder of the serine residue undergoes an oxidative deamination to produce ammonia and the pyruvoyl group blocking the N-terminus of the alpha chain.

It carries out the reaction S-adenosyl-L-methionine + H(+) = S-adenosyl 3-(methylsulfanyl)propylamine + CO2. Its pathway is amine and polyamine biosynthesis; S-adenosylmethioninamine biosynthesis; S-adenosylmethioninamine from S-adenosyl-L-methionine: step 1/1. Functionally, catalyzes the decarboxylation of S-adenosylmethionine to S-adenosylmethioninamine (dcAdoMet), the propylamine donor required for the synthesis of the polyamines spermine and spermidine from the diamine putrescine. This Pyrococcus horikoshii (strain ATCC 700860 / DSM 12428 / JCM 9974 / NBRC 100139 / OT-3) protein is S-adenosylmethionine decarboxylase proenzyme.